The chain runs to 399 residues: Lipase member K (399 aa).

An N-terminal signal peptide occupies residues 1–19; it reads MWQLLAAACWMLLLGSMYG. The AB hydrolase-1 domain maps to 78-378; that stretch reads PAVYLQHGLI…HYNHVDFYLG (301 aa). Residue S172 is the Nucleophile of the active site. C246 and C255 are disulfide-bonded. 2 N-linked (GlcNAc...) asparagine glycosylation sites follow: N271 and N327. Residues D343 and H372 each act as charge relay system in the active site.

This sequence belongs to the AB hydrolase superfamily. Lipase family. Exclusively expressed in the epidermis within the granular keratinocytes.

It localises to the secreted. In terms of biological role, plays a highly specific role in the last step of keratinocyte differentiation. May have an essential function in lipid metabolism of the most differentiated epidermal layers. The polypeptide is Lipase member K (LIPK) (Homo sapiens (Human)).